We begin with the raw amino-acid sequence, 238 residues long: Large ribosomal subunit protein uL1 (238 aa).

It belongs to the universal ribosomal protein uL1 family. As to quaternary structure, part of the 50S ribosomal subunit.

Binds directly to 23S rRNA. The L1 stalk is quite mobile in the ribosome, and is involved in E site tRNA release. Its function is as follows. Protein L1 is also a translational repressor protein, it controls the translation of the L11 operon by binding to its mRNA. In Picosynechococcus sp. (strain ATCC 27264 / PCC 7002 / PR-6) (Agmenellum quadruplicatum), this protein is Large ribosomal subunit protein uL1.